The chain runs to 138 residues: MSSAHNAYNAGIMQKTGKAFADEFFAEENQVVHESNAVVLVLMKSDEIDAIIEDIVLKGGKAKNPSIVVEDKAGFWWIKADGAIEIDAAEAGELLGKPFSVYDLLINVSSTVGRAYTLGTKFTITSELMGLDRALTDI.

It belongs to the TmoD/XamoD family. In terms of assembly, the soluble methane monooxygenase (sMMO) consists of four components A/MMOH (composed of alpha/MmoX, beta/MmoY and gamma/MmoZ), B/MMOB (MmoB), C/MMOR (MmoC) and D/MMOD (MmoD).

Its function is as follows. The B protein acts as a regulator of electron flow through the soluble mmo complex, switching the enzyme from an oxidase to a hydroxylase in the presence of the substrate. The protein is Methane monooxygenase regulatory protein B (mmoB) of Methylosinus trichosporium.